The following is a 297-amino-acid chain: CASP-like protein 4A2 (297 aa).

Positions 1–20 are enriched in polar residues; that stretch reads MKMKRTASSNSEAQSYNESP. The disordered stretch occupies residues 1-135; the sequence is MKMKRTASSN…PINGEESTRT (135 aa). Over 1–149 the chain is Cytoplasmic; that stretch reads MKMKRTASSN…ARGDDLVSLT (149 aa). A compositionally biased stretch (pro residues) spans 69 to 83; the sequence is LPSPIPPPPPQFPPP. A helical membrane pass occupies residues 150 to 170; that stretch reads ALGFRITEVILCVISFSIMAA. The Extracellular portion of the chain corresponds to 171 to 191; the sequence is DKTQGWSGDSYDRYKEYRYCL. Residues 192-212 form a helical membrane-spanning segment; the sequence is AVNVIAFVYSAFEACDAACYI. Residues 213 to 225 are Cytoplasmic-facing; the sequence is AKESYMINCGFHD. A helical membrane pass occupies residues 226–246; it reads LFVFSMDQLLAYLLMSASSCA. Over 247–265 the chain is Extracellular; sequence ATRVDDWVSNWGKDEFTQM. Residues 266–286 traverse the membrane as a helical segment; it reads ATASIAVSFLAFGAFAVSALI. The Cytoplasmic segment spans residues 287–297; that stretch reads SSYRLFTHASS.

It belongs to the Casparian strip membrane proteins (CASP) family. In terms of assembly, homodimer and heterodimers.

The protein resides in the cell membrane. This is CASP-like protein 4A2 from Arabidopsis thaliana (Mouse-ear cress).